The chain runs to 103 residues: ELVSQLCLKKERVCEGSSLTISCPQKGAGISIARAIYGRTKTQVCPSDGATSNVNCKASNALNVVRDLCRGKSSCTVEASNDVFGDPCMHTYKYLELSYDCSK.

The region spanning 13 to 102 is the SUEL-type lectin domain; that stretch reads VCEGSSLTIS…KYLELSYDCS (90 aa). Intrachain disulfides connect Cys-14/Cys-45, Cys-23/Cys-101, Cys-56/Cys-88, and Cys-69/Cys-75.

As to quaternary structure, homodimer; disulfide-linked. Post-translationally, not glycosylated.

Rhamnose-binding lectin. Also binds alpha-D-melibiose, alpha-D-lactose, beta-D-lactose, methyl-alpha-D-galactopyranoside, methyl-beta-D--galactopyranoside and D-galactose but not D-arabinose, L-fucose, D-glucose, D-mannose, D-maltose, D-sucrose, N-acetyl-D-galactosamine, N-acetyl-D-glucosamine, N-acetyl-D-mannosamine-D-xylose or by glycoproteins orosomucoid, thyroglobulin, ovomucoid and porcine stomach mucin. Shows cation-independent hemagglutinating activity against rabbit and human erythrocytes. Agglutinates cells of Gram-positive bacterial species S.aureus but not those of Gram-negative E.coli. The chain is L-rhamnose-binding lectin ELEL-1 from Echinometra lucunter (Rock-boring urchin).